Consider the following 130-residue polypeptide: Small ribosomal subunit protein uS8y (130 aa).

It belongs to the universal ribosomal protein uS8 family.

The chain is Small ribosomal subunit protein uS8y (RPS15AC) from Arabidopsis thaliana (Mouse-ear cress).